Consider the following 305-residue polypeptide: ATP-dependent Clp protease proteolytic subunit-related protein 4, chloroplastic (305 aa).

A chloroplast-targeting transit peptide spans 1–68 (MEVAAATATS…SSDLCGAKLR (68 aa)).

Belongs to the peptidase S14 family. In terms of assembly, component of the chloroplastic Clp protease core complex which consist of at least 16 proteins: CLPP4 (3 copies), CLPP5 (3 copies), CLPR4 (2 copies), ClpP1 (1 copy), CLPP6 (1 copy), CLPR2 (1 copy), CLPT1 (1 copy), CLPT2 (1 copy) and 3 copies of CLPP3 and/or CLPR1 and/or CLPR3. The core complex is organized in two heptameric rings, one containing CLPP3,4,5,6 in a 1:2:3:1 ratio and the other CLPP1 and CLPR1,2,3,4 in a 3:1:1:1:1 ratio.

The protein resides in the plastid. It is found in the chloroplast. Involved in plastid protein homeostasis. The sequence is that of ATP-dependent Clp protease proteolytic subunit-related protein 4, chloroplastic from Arabidopsis thaliana (Mouse-ear cress).